The sequence spans 161 residues: Phosphopantetheine adenylyltransferase (161 aa).

Residue serine 9 coordinates substrate. Residues 9-10 (SF) and histidine 17 contribute to the ATP site. Substrate contacts are provided by lysine 41, leucine 73, and lysine 87. Residues 88–90 (GLR), glutamate 98, and 122–128 (YSFVSSS) contribute to the ATP site.

Belongs to the bacterial CoaD family. In terms of assembly, homohexamer. It depends on Mg(2+) as a cofactor.

It localises to the cytoplasm. The catalysed reaction is (R)-4'-phosphopantetheine + ATP + H(+) = 3'-dephospho-CoA + diphosphate. It participates in cofactor biosynthesis; coenzyme A biosynthesis; CoA from (R)-pantothenate: step 4/5. Functionally, reversibly transfers an adenylyl group from ATP to 4'-phosphopantetheine, yielding dephospho-CoA (dPCoA) and pyrophosphate. In Mycobacteroides abscessus (strain ATCC 19977 / DSM 44196 / CCUG 20993 / CIP 104536 / JCM 13569 / NCTC 13031 / TMC 1543 / L948) (Mycobacterium abscessus), this protein is Phosphopantetheine adenylyltransferase.